The following is a 336-amino-acid chain: Deoxyhypusine hydroxylase (336 aa).

HEAT-like PBS-type repeat units lie at residues 68–94 (LKHE…VVQD) and 101–127 (CRHE…LRDN). Fe cation contacts are provided by His70, Glu71, His103, and Glu104. Residues 158-179 (LKPSDFTSIDPAPPMPLTAKEP) form a disordered region. HEAT-like PBS-type repeat units lie at residues 235-261 (FRHE…TLSD) and 268-295 (VRHE…FLND). His237, Glu238, His270, and Glu271 together coordinate Fe cation.

It belongs to the deoxyhypusine hydroxylase family. Fe(2+) is required as a cofactor.

It is found in the cytoplasm. It localises to the nucleus. It catalyses the reaction [eIF5A protein]-deoxyhypusine + AH2 + O2 = [eIF5A protein]-hypusine + A + H2O. Its pathway is protein modification; eIF5A hypusination. Functionally, catalyzes the hydroxylation of the N(6)-(4-aminobutyl)-L-lysine intermediate to form hypusine, an essential post-translational modification only found in mature eIF-5A factor. The polypeptide is Deoxyhypusine hydroxylase (lia1) (Emericella nidulans (strain FGSC A4 / ATCC 38163 / CBS 112.46 / NRRL 194 / M139) (Aspergillus nidulans)).